The sequence spans 250 residues: Cruxrhodopsin-1 (250 aa).

At 1-9 (MPEPGSEAI) the chain is on the extracellular side. Residues 10-27 (WLWLGTAGMFLGMLYFIA) form a helical membrane-spanning segment. At 28–41 (RGWGETDSRRQKFY) the chain is on the cytoplasmic side. A helical transmembrane segment spans residues 42-60 (IATILITAIAFVNYLAMAL). At 61 to 77 (GFGLTIVEFAGEEHPIY) the chain is on the extracellular side. A helical transmembrane segment spans residues 78 to 94 (WARYSDWLFTTPLLLYD). The Cytoplasmic portion of the chain corresponds to 95-105 (LGLLAGADRNT). A helical membrane pass occupies residues 106-125 (ITSLVSLDVLMIGTGLVATL). The Extracellular portion of the chain corresponds to 126–138 (SPGSGVLSAGAER). A helical membrane pass occupies residues 139–158 (LVWWGISTAFLLVLLYFLFS). Residues 159 to 176 (SLSGRVADLPSDTRSTFK) are Cytoplasmic-facing. Residues 177–195 (TLRNLVTVVWLVYPVWWLI) form a helical membrane-spanning segment. The Extracellular portion of the chain corresponds to 196-207 (GTEGIGLVGIGI). The chain crosses the membrane as a helical span at residues 208-227 (ETAGFMVIDLTAKVGFGIIL). K220 bears the N6-(retinylidene)lysine mark. Residues 228–250 (LRSHGVLDGAAETTGTGATPADD) are Cytoplasmic-facing.

This sequence belongs to the archaeal/bacterial/fungal opsin family. In terms of assembly, homotrimer.

Its subcellular location is the cell membrane. Functionally, light-driven proton pump. The chain is Cruxrhodopsin-1 (cop1) from Haloarcula argentinensis.